Reading from the N-terminus, the 155-residue chain is uncharacterized protein (155 aa).

Helical transmembrane passes span 4–24 (IVGA…AGYL), 46–66 (AIGI…AIVY), 77–97 (FWFT…FQFT), 101–121 (LLAA…LLII), and 130–150 (SYLL…SFTI).

The protein belongs to the TspO/BZRP family.

It localises to the cell membrane. This is an uncharacterized protein from Bacillus subtilis (strain 168).